Here is a 306-residue protein sequence, read N- to C-terminus: Aspartate carbamoyltransferase catalytic subunit (306 aa).

The carbamoyl phosphate site is built by R51 and T52. K79 provides a ligand contact to L-aspartate. Positions 101, 130, and 133 each coordinate carbamoyl phosphate. Residues R163 and R215 each contribute to the L-aspartate site. G256 and P257 together coordinate carbamoyl phosphate.

This sequence belongs to the aspartate/ornithine carbamoyltransferase superfamily. ATCase family. As to quaternary structure, heterododecamer (2C3:3R2) of six catalytic PyrB chains organized as two trimers (C3), and six regulatory PyrI chains organized as three dimers (R2).

It carries out the reaction carbamoyl phosphate + L-aspartate = N-carbamoyl-L-aspartate + phosphate + H(+). It participates in pyrimidine metabolism; UMP biosynthesis via de novo pathway; (S)-dihydroorotate from bicarbonate: step 2/3. In terms of biological role, catalyzes the condensation of carbamoyl phosphate and aspartate to form carbamoyl aspartate and inorganic phosphate, the committed step in the de novo pyrimidine nucleotide biosynthesis pathway. In Ehrlichia ruminantium (strain Welgevonden), this protein is Aspartate carbamoyltransferase catalytic subunit.